We begin with the raw amino-acid sequence, 276 residues long: Shikimate dehydrogenase (NADP(+)) (276 aa).

Shikimate is bound by residues Ser-15–Ser-17 and Thr-62. Lys-66 acts as the Proton acceptor in catalysis. NADP(+) is bound at residue Glu-78. Shikimate-binding residues include Asn-87 and Asp-102. NADP(+) is bound by residues Asn-151–Lys-156 and Ile-218. Tyr-220 contacts shikimate. Residue Gly-241 participates in NADP(+) binding.

It belongs to the shikimate dehydrogenase family. As to quaternary structure, homodimer.

It catalyses the reaction shikimate + NADP(+) = 3-dehydroshikimate + NADPH + H(+). Its pathway is metabolic intermediate biosynthesis; chorismate biosynthesis; chorismate from D-erythrose 4-phosphate and phosphoenolpyruvate: step 4/7. In terms of biological role, involved in the biosynthesis of the chorismate, which leads to the biosynthesis of aromatic amino acids. Catalyzes the reversible NADPH linked reduction of 3-dehydroshikimate (DHSA) to yield shikimate (SA). This is Shikimate dehydrogenase (NADP(+)) from Geobacillus kaustophilus (strain HTA426).